Here is a 100-residue protein sequence, read N- to C-terminus: MHLAPHERDKLLVHLAARLARERMDRGLKLNHPEAVALITDHVVEGARDGRGVSELMKSGREVLTAEQVLDGVADMVREVQVEATFPDGTKLVTVHDPIN.

The protein belongs to the urease gamma subunit family. As to quaternary structure, heterotrimer of UreA (gamma), UreB (beta) and UreC (alpha) subunits. Three heterotrimers associate to form the active enzyme.

The protein localises to the cytoplasm. It catalyses the reaction urea + 2 H2O + H(+) = hydrogencarbonate + 2 NH4(+). It participates in nitrogen metabolism; urea degradation; CO(2) and NH(3) from urea (urease route): step 1/1. The chain is Urease subunit gamma from Saccharopolyspora erythraea (strain ATCC 11635 / DSM 40517 / JCM 4748 / NBRC 13426 / NCIMB 8594 / NRRL 2338).